Here is a 289-residue protein sequence, read N- to C-terminus: Metal-staphylopine import system permease protein CntC (289 aa).

5 helical membrane passes run 13–33 (AVIA…APLV), 77–97 (LLYV…LGFL), 115–135 (VMLA…FGMG), 194–214 (IAII…GFSF), and 249–269 (IAIV…QIAI). The 190-residue stretch at 73 to 262 (IRPSLLYVFV…IIVMAFNFLS (190 aa)) folds into the ABC transmembrane type-1 domain.

Belongs to the binding-protein-dependent transport system permease family. The complex is composed of two ATP-binding proteins (CntD and CntF), two transmembrane proteins (CntB and CntC) and a solute-binding protein (CntA).

It localises to the cell membrane. In terms of biological role, part of the ABC transporter complex CntABCDF (Opp1) involved in the uptake of metal in complex with the metallophore staphylopine (StP). May be involved in the import of a large array of divalent metals ions such as nickel, cobalt, zinc, copper and iron. Probably responsible for the translocation of the substrate across the membrane. This Staphylococcus aureus (strain Mu50 / ATCC 700699) protein is Metal-staphylopine import system permease protein CntC.